The chain runs to 360 residues: 3-dehydroquinate synthase (360 aa).

Residues D72–K77, G106–D110, T130–T131, K143, K152, and T170–T173 contribute to the NAD(+) site. Residues E185, H248, and H265 each contribute to the Zn(2+) site.

This sequence belongs to the sugar phosphate cyclases superfamily. Dehydroquinate synthase family. Requires Co(2+) as cofactor. The cofactor is Zn(2+). NAD(+) serves as cofactor.

It localises to the cytoplasm. It catalyses the reaction 7-phospho-2-dehydro-3-deoxy-D-arabino-heptonate = 3-dehydroquinate + phosphate. It functions in the pathway metabolic intermediate biosynthesis; chorismate biosynthesis; chorismate from D-erythrose 4-phosphate and phosphoenolpyruvate: step 2/7. Its function is as follows. Catalyzes the conversion of 3-deoxy-D-arabino-heptulosonate 7-phosphate (DAHP) to dehydroquinate (DHQ). In Geobacter metallireducens (strain ATCC 53774 / DSM 7210 / GS-15), this protein is 3-dehydroquinate synthase.